The chain runs to 193 residues: LOB domain-containing protein 12 (193 aa).

The LOB domain occupies 7–108 (SPCASCKLLR…MQLAVAQAEI (102 aa)).

This sequence belongs to the LOB domain-containing protein family. Expressed predominantly in roots, and at low levels in shoots, floral stems and open flowers.

The protein is LOB domain-containing protein 12 (LBD12) of Arabidopsis thaliana (Mouse-ear cress).